The sequence spans 155 residues: Small ribosomal subunit protein uS7 (155 aa).

This sequence belongs to the universal ribosomal protein uS7 family. Part of the 30S ribosomal subunit. Contacts proteins S9 and S11.

Its function is as follows. One of the primary rRNA binding proteins, it binds directly to 16S rRNA where it nucleates assembly of the head domain of the 30S subunit. Is located at the subunit interface close to the decoding center, probably blocks exit of the E-site tRNA. This is Small ribosomal subunit protein uS7 from Thermosipho melanesiensis (strain DSM 12029 / CIP 104789 / BI429).